Reading from the N-terminus, the 1534-residue chain is DNA-directed RNA polymerase subunit beta'' (1534 aa).

Zn(2+) contacts are provided by cysteine 220, cysteine 296, cysteine 303, and cysteine 306. 2 stretches are compositionally biased toward basic and acidic residues: residues 644–668 (RTQE…RTRE) and 678–688 (PENKYRTREGE). Disordered regions lie at residues 644–698 (RTQE…EDEY) and 719–800 (YRTL…KKEG). Composition is skewed to acidic residues over residues 744 to 762 (GEYE…SSED) and 770 to 789 (TLEE…EYGS).

The protein belongs to the RNA polymerase beta' chain family. RpoC2 subfamily. In terms of assembly, in plastids the minimal PEP RNA polymerase catalytic core is composed of four subunits: alpha, beta, beta', and beta''. When a (nuclear-encoded) sigma factor is associated with the core the holoenzyme is formed, which can initiate transcription. Requires Zn(2+) as cofactor.

The protein resides in the plastid. It localises to the chloroplast. It catalyses the reaction RNA(n) + a ribonucleoside 5'-triphosphate = RNA(n+1) + diphosphate. In terms of biological role, DNA-dependent RNA polymerase catalyzes the transcription of DNA into RNA using the four ribonucleoside triphosphates as substrates. This Saccharum officinarum (Sugarcane) protein is DNA-directed RNA polymerase subunit beta''.